Reading from the N-terminus, the 114-residue chain is T cell receptor beta variable 4-1 (114 aa).

The first 21 residues, 1–21, serve as a signal peptide directing secretion; that stretch reads MGCRLLCCAVLCLLGAVPIDT. The 93-residue stretch at 22 to 114 folds into the Ig-like domain; it reads EVTQTPKHLV…SALYLCASSQ (93 aa). Cysteines 42 and 110 form a disulfide. Asn-76 and Asn-89 each carry an N-linked (GlcNAc...) asparagine glycan.

Alpha-beta TR is a heterodimer composed of an alpha and beta chain; disulfide-linked. The alpha-beta TR is associated with the transmembrane signaling CD3 coreceptor proteins to form the TR-CD3 (TcR or TCR). The assembly of alpha-beta TR heterodimers with CD3 occurs in the endoplasmic reticulum where a single alpha-beta TR heterodimer associates with one CD3D-CD3E heterodimer, one CD3G-CD3E heterodimer and one CD247 homodimer forming a stable octameric structure. CD3D-CD3E and CD3G-CD3E heterodimers preferentially associate with TR alpha and TR beta chains, respectively. The association of the CD247 homodimer is the last step of TcR assembly in the endoplasmic reticulum and is required for transport to the cell surface.

The protein resides in the cell membrane. V region of the variable domain of T cell receptor (TR) beta chain that participates in the antigen recognition. Alpha-beta T cell receptors are antigen specific receptors which are essential to the immune response and are present on the cell surface of T lymphocytes. Recognize peptide-major histocompatibility (MH) (pMH) complexes that are displayed by antigen presenting cells (APC), a prerequisite for efficient T cell adaptive immunity against pathogens. Binding of alpha-beta TR to pMH complex initiates TR-CD3 clustering on the cell surface and intracellular activation of LCK that phosphorylates the ITAM motifs of CD3G, CD3D, CD3E and CD247 enabling the recruitment of ZAP70. In turn ZAP70 phosphorylates LAT, which recruits numerous signaling molecules to form the LAT signalosome. The LAT signalosome propagates signal branching to three major signaling pathways, the calcium, the mitogen-activated protein kinase (MAPK) kinase and the nuclear factor NF-kappa-B (NF-kB) pathways, leading to the mobilization of transcription factors that are critical for gene expression and essential for T cell growth and differentiation. The T cell repertoire is generated in the thymus, by V-(D)-J rearrangement. This repertoire is then shaped by intrathymic selection events to generate a peripheral T cell pool of self-MH restricted, non-autoaggressive T cells. Post-thymic interaction of alpha-beta TR with the pMH complexes shapes TR structural and functional avidity. The protein is T cell receptor beta variable 4-1 of Homo sapiens (Human).